We begin with the raw amino-acid sequence, 626 residues long: Methanol dehydrogenase [cytochrome c] subunit 1 (626 aa).

The signal sequence occupies residues 1–27 (MSRFVTSVSALAMLALAPAALSSVAYA). A disulfide bond links cysteine 130 and cysteine 131. Ca(2+)-binding residues include glutamate 204 and asparagine 288. The Proton acceptor role is filled by aspartate 330. Cysteine 413 and cysteine 442 form a disulfide bridge.

Belongs to the bacterial PQQ dehydrogenase family. Heterotetramer composed of 2 alpha and 2 beta subunits. It depends on pyrroloquinoline quinone as a cofactor. Ca(2+) serves as cofactor.

The protein resides in the cell inner membrane. It carries out the reaction 2 Fe(III)-[cytochrome cL] + a primary alcohol = 2 Fe(II)-[cytochrome cL] + an aldehyde + 2 H(+). Functionally, catalyzes the oxidation of primary alcohols including methanol. The polypeptide is Methanol dehydrogenase [cytochrome c] subunit 1 (moxF) (Methylobacterium organophilum).